We begin with the raw amino-acid sequence, 140 residues long: Large ribosomal subunit protein uL11 (140 aa).

The protein belongs to the universal ribosomal protein uL11 family. In terms of assembly, part of the ribosomal stalk of the 50S ribosomal subunit. Interacts with L10 and the large rRNA to form the base of the stalk. L10 forms an elongated spine to which L12 dimers bind in a sequential fashion forming a multimeric L10(L12)X complex. In terms of processing, one or more lysine residues are methylated.

In terms of biological role, forms part of the ribosomal stalk which helps the ribosome interact with GTP-bound translation factors. The protein is Large ribosomal subunit protein uL11 of Geobacter metallireducens (strain ATCC 53774 / DSM 7210 / GS-15).